Consider the following 41-residue polypeptide: Photosystem I reaction center subunit IX (41 aa).

Residues 7–29 traverse the membrane as a helical segment; that stretch reads YLSTAPVLLTVWLSITASGIMII.

This sequence belongs to the PsaJ family.

The protein localises to the plastid. It is found in the chloroplast thylakoid membrane. In terms of biological role, may help in the organization of the PsaE and PsaF subunits. In Heterosigma akashiwo (strain NIES-293 / 8280G21-1), this protein is Photosystem I reaction center subunit IX.